A 1854-amino-acid chain; its full sequence is PKS-NRPS hybrid synthetase ATPKS (1854 aa).

The segment at 24–423 (FDQTQTRYSP…GRADTQIKIR (400 aa)) is adenylation (A) domain. The 76-residue stretch at 523-598 (IPASTLTQQL…NLAAYLSDQT (76 aa)) folds into the Carrier 1 domain. Ser558 is subject to O-(pantetheine 4'-phosphoryl)serine. In terms of domain architecture, Ketosynthase family 3 (KS3) spans 617–1049 (GEDIAVISMA…GTNAHAIIEE (433 aa)). Active-site for beta-ketoacyl synthase activity residues include Cys791, His926, and His967. Residues 1162 to 1496 (LFSGQGTERA…SLSDLHIRKV (335 aa)) form a malonyl-CoA:ACP transacylase (MAT) domain region. Residues 1536–1556 (KSSGQPSGQSPSGCPQPTGQI) form a disordered region. Residues 1537-1555 (SSGQPSGQSPSGCPQPTGQ) show a composition bias toward low complexity. One can recognise a Carrier 2 domain in the interval 1776-1851 (MMLQGLVRGI…SLSDALQKQV (76 aa)). An O-(pantetheine 4'-phosphoryl)serine modification is found at Ser1811.

It in the C-terminal section; belongs to the NRP synthetase family.

Its pathway is secondary metabolite biosynthesis. PKS-NRPS hybrid synthetase; part of the gene cluster that mediates the biosynthesis of pyrophen and campyrone B, which represent a class of fungal amino acid-derived alpha-pyrone natural products. The first step of pyrophen biosynthesis is catalyzed by the PKS-NRPS hybrid synthetase ATPKS that uptakes and condensates L-phenylalanine and malonyl-CoA in order to produce desmethyldesacetylpyrophen. Although the A domain does not discriminate between 2 enantiomeric phenylalanines, the downstream KS domain must play a gate keeping role to stereoselectively accept the L-phenylalanyl-S-phosphopantetheine (Ppant)-T domain intermediate for chain elongation. The resulting amino acid derived diketide is off-loaded through lactonization to yield the alpha-pyrone intermediate desmethyldesacetylpyrophen. The cluster-specific O-methyltransferase (OMT) then methylates desmethyldesacetylpyrophen to desacetylpyrophen, which is further acetylated to pyrophen by an endogenous yet unidentified N-acetyltransferase. ATPKS has relaxed substrate specificity to activate and extend branched-chain amino acid L-leucine to produce small amounts of campyrone B. The polypeptide is PKS-NRPS hybrid synthetase ATPKS (Aspergillus niger (strain ATCC 1015 / CBS 113.46 / FGSC A1144 / LSHB Ac4 / NCTC 3858a / NRRL 328 / USDA 3528.7)).